Reading from the N-terminus, the 392-residue chain is Adenosine 3'-phospho 5'-phosphosulfate transporter 2 (392 aa).

The disordered stretch occupies residues 11 to 35; it reads NINGSASGQQAPTSNSPTLTRKSSS. 10 helical membrane-spanning segments follow: residues 62-82, 87-107, 136-156, 159-179, 185-205, 212-232, 249-269, 286-306, 314-334, and 338-358; these read CAGV…IFTV, PFGW…GLVE, LVLA…LGYL, PTQV…SILI, GPLD…FTLA, NFNL…AAIG, VVFY…LVTG, FGYG…VLAL, IAAT…FVLF, and FTVQ…LNVY.

This sequence belongs to the nucleotide-sugar transporter family. SLC35B subfamily.

The protein resides in the golgi apparatus membrane. In terms of biological role, mediates the transport of adenosine 3'-phospho 5'-phosphosulfate (PAPS), from cytosol into Golgi. PAPS is a universal sulfuryl donor for sulfation events that take place in the Golgi. Essential for viability. Involved in glycosaminoglycan synthesis and the subsequent signaling. May be involved in hh and dpp signaling by controlling the sulfation of heparan sulfate (HS). This Drosophila pseudoobscura pseudoobscura (Fruit fly) protein is Adenosine 3'-phospho 5'-phosphosulfate transporter 2.